Consider the following 1159-residue polypeptide: ATP-dependent helicase/deoxyribonuclease subunit B (1159 aa).

The protein belongs to the helicase family. AddB/RexB type 2 subfamily. As to quaternary structure, heterodimer of AddA and RexB. Mg(2+) serves as cofactor.

Its function is as follows. The heterodimer acts as both an ATP-dependent DNA helicase and an ATP-dependent, dual-direction single-stranded exonuclease. Recognizes the chi site generating a DNA molecule suitable for the initiation of homologous recombination. This subunit has 5' -&gt; 3' nuclease activity but not helicase activity. This is ATP-dependent helicase/deoxyribonuclease subunit B from Leuconostoc mesenteroides subsp. mesenteroides (strain ATCC 8293 / DSM 20343 / BCRC 11652 / CCM 1803 / JCM 6124 / NCDO 523 / NBRC 100496 / NCIMB 8023 / NCTC 12954 / NRRL B-1118 / 37Y).